A 190-amino-acid polypeptide reads, in one-letter code: Iron-sulfur assembly protein 1 (190 aa).

Positions 49–71 (PSLKPSAAGSGSTAPKPVTEREI) are disordered. Residues Cys-116, Cys-180, and Cys-182 each contribute to the Fe cation site.

It belongs to the HesB/IscA family.

It is found in the mitochondrion matrix. In terms of biological role, involved in the assembly of mitochondrial and cytoplasmic iron-sulfur proteins. Probably involved in the binding of an intermediate of Fe/S cluster assembly. This Schizosaccharomyces pombe (strain 972 / ATCC 24843) (Fission yeast) protein is Iron-sulfur assembly protein 1 (isa1).